Consider the following 207-residue polypeptide: Segregation and condensation protein B (207 aa).

Belongs to the ScpB family. Homodimer. Homodimerization may be required to stabilize the binding of ScpA to the Smc head domains. Component of a cohesin-like complex composed of ScpA, ScpB and the Smc homodimer, in which ScpA and ScpB bind to the head domain of Smc. The presence of the three proteins is required for the association of the complex with DNA.

It localises to the cytoplasm. Functionally, participates in chromosomal partition during cell division. May act via the formation of a condensin-like complex containing Smc and ScpA that pull DNA away from mid-cell into both cell halves. The polypeptide is Segregation and condensation protein B (Mycoplasma genitalium (strain ATCC 33530 / DSM 19775 / NCTC 10195 / G37) (Mycoplasmoides genitalium)).